Consider the following 146-residue polypeptide: Prostaglandin E synthase 3 (146 aa).

A CS domain is found at 1 to 76 (VFIEFCVEDS…ESGQAWPRLT (76 aa)). The segment at 110–146 (SEMMNNMGGDDDVDLPEVDGADDDSPDSDDEKMPDLE) is disordered. Residues 118-139 (GDDDVDLPEVDGADDDSPDSDD) are compositionally biased toward acidic residues.

It belongs to the p23/wos2 family. In terms of assembly, binds to telomerase. Binds to the progesterone receptor.

The protein localises to the cytoplasm. The enzyme catalyses prostaglandin H2 = prostaglandin E2. It functions in the pathway lipid metabolism; prostaglandin biosynthesis. Its function is as follows. Molecular chaperone. In Gallus gallus (Chicken), this protein is Prostaglandin E synthase 3 (PTGES3).